The following is a 538-amino-acid chain: Ribosome-associated complex subunit SSZ1 (538 aa).

The tract at residues 400–538 (PVIVNTPHLK…KTGNAVKGEL (139 aa)) is peptide-binding domain. The segment at 464–484 (PIPKEENAEEDDESEWSDDEP) is disordered. Residues 470–484 (NAEEDDESEWSDDEP) show a composition bias toward acidic residues. Phosphoserine occurs at positions 477 and 480.

Belongs to the heat shock protein 70 family. RAC is a heterodimer of the Hsp70/DnaK-type chaperone SSZ1 and the Hsp40/DnaJ-type chaperone ZUO1. RAC associates with ribosomes via ZUO1.

The protein resides in the cytoplasm. Its function is as follows. Component of the ribosome-associated complex (RAC), a heterodimeric chaperone complex involved in regulation of accurate translation termination and in folding or maintaining nascent polypeptides in a folding-competent state. RAC stimulates the ATPase activity of the ribosome-associated pool of Hsp70-type chaperones SSB1/SSB2 that bind to the nascent polypeptide chain. SSZ1 is required for ZUO1 to function efficiently as a J-protein for SSB1/SSB2. Also involved in pleiotropic drug resistance by post-translational activation of transcription factor PDR1. The protein is Ribosome-associated complex subunit SSZ1 (SSZ1) of Saccharomyces cerevisiae (strain ATCC 204508 / S288c) (Baker's yeast).